The chain runs to 163 residues: Interleukin-17F (163 aa).

An N-terminal signal peptide occupies residues 1 to 30; the sequence is MTVKSLHVTAMVKYLLLLILGLAFLRETAA. Residue Asn83 is glycosylated (N-linked (GlcNAc...) asparagine). Disulfide bonds link Cys102–Cys152 and Cys107–Cys154.

This sequence belongs to the IL-17 family. As to quaternary structure, homodimer; disulfide-linked. Heterodimer with IL17A (IL17A-IL17F). Forms complexes with IL17RA and IL17RC receptors with 2:1 binding stoichiometry: two receptor chains for one interleukin molecule. IL17F homodimer forms predominantly complexes with IL17RC homodimer, whereas IL17A-IL17F favors complexes with IL17RA-IL17RC. IL17RA and IL17RC chains cannot distinguish between IL17A and IL17F molecules, potentially enabling the formation of topologically distinct complexes.

Its subcellular location is the secreted. In terms of biological role, effector cytokine of innate and adaptive immune system involved in antimicrobial host defense and maintenance of tissue integrity. IL17A-IL17F signals via IL17RA-IL17RC heterodimeric receptor complex, triggering homotypic interaction of IL17RA and IL17RC chains with TRAF3IP2 adapter through SEFIR domains. This leads to downstream TRAF6-mediated activation of NF-kappa-B and MAPkinase pathways ultimately resulting in transcriptional activation of cytokines, chemokines, antimicrobial peptides and matrix metalloproteinases, with potential strong immune inflammation. IL17A-IL17F is primarily involved in host defense against extracellular bacteria and fungi by inducing neutrophilic inflammation. As signature effector cytokine of T-helper 17 cells (Th17), primarily induces neutrophil activation and recruitment at infection and inflammatory sites. Stimulates the production of antimicrobial beta-defensins DEFB1, DEFB103A, and DEFB104A by mucosal epithelial cells, limiting the entry of microbes through the epithelial barriers. IL17F homodimer can signal via IL17RC homodimeric receptor complex, triggering downstream activation of TRAF6 and NF-kappa-B signaling pathway. Via IL17RC induces transcriptional activation of IL33, a potent cytokine that stimulates group 2 innate lymphoid cells and adaptive T-helper 2 cells involved in pulmonary allergic response to fungi. Likely via IL17RC, promotes sympathetic innervation of peripheral organs by coordinating the communication between gamma-delta T cells and parenchymal cells. Stimulates sympathetic innervation of thermogenic adipose tissue by driving TGFB1 expression. Regulates the composition of intestinal microbiota and immune tolerance by inducing antimicrobial proteins that specifically control the growth of commensal Firmicutes and Bacteroidetes. The polypeptide is Interleukin-17F (IL17F) (Callithrix jacchus (White-tufted-ear marmoset)).